Reading from the N-terminus, the 197-residue chain is Nucleoid occlusion factor SlmA (197 aa).

The 61-residue stretch at 7–67 folds into the HTH tetR-type domain; it reads INRREHILQC…GLIEFIEDAI (61 aa). The segment at residues 30 to 49 is a DNA-binding region (H-T-H motif); sequence TTAKLAAEVGVSEAALYRHF. Residues 110-130 are a coiled coil; the sequence is ALLGENERLRSRIDVLFAKIE.

It belongs to the nucleoid occlusion factor SlmA family. As to quaternary structure, homodimer. Interacts with FtsZ.

It localises to the cytoplasm. The protein localises to the nucleoid. Its function is as follows. Required for nucleoid occlusion (NO) phenomenon, which prevents Z-ring formation and cell division over the nucleoid. Acts as a DNA-associated cell division inhibitor that binds simultaneously chromosomal DNA and FtsZ, and disrupts the assembly of FtsZ polymers. SlmA-DNA-binding sequences (SBS) are dispersed on non-Ter regions of the chromosome, preventing FtsZ polymerization at these regions. The protein is Nucleoid occlusion factor SlmA of Shewanella frigidimarina (strain NCIMB 400).